A 95-amino-acid polypeptide reads, in one-letter code: Large ribosomal subunit protein bL25 (95 aa).

It belongs to the bacterial ribosomal protein bL25 family. In terms of assembly, part of the 50S ribosomal subunit; part of the 5S rRNA/L5/L18/L25 subcomplex. Contacts the 5S rRNA. Binds to the 5S rRNA independently of L5 and L18.

In terms of biological role, this is one of the proteins that binds to the 5S RNA in the ribosome where it forms part of the central protuberance. The protein is Large ribosomal subunit protein bL25 of Actinobacillus succinogenes (strain ATCC 55618 / DSM 22257 / CCUG 43843 / 130Z).